Consider the following 883-residue polypeptide: Phosphoenolpyruvate carboxylase (883 aa).

Active-site residues include His138 and Lys546.

This sequence belongs to the PEPCase type 1 family. The cofactor is Mg(2+).

It carries out the reaction oxaloacetate + phosphate = phosphoenolpyruvate + hydrogencarbonate. In terms of biological role, forms oxaloacetate, a four-carbon dicarboxylic acid source for the tricarboxylic acid cycle. This chain is Phosphoenolpyruvate carboxylase, found in Escherichia coli O7:K1 (strain IAI39 / ExPEC).